A 143-amino-acid polypeptide reads, in one-letter code: 3-dehydroquinate dehydratase (143 aa).

The Proton acceptor role is filled by Tyr22. Substrate is bound by residues Asn73, His79, and Asp86. His99 acts as the Proton donor in catalysis. Residues 100–101 (LS) and Arg110 each bind substrate.

It belongs to the type-II 3-dehydroquinase family. In terms of assembly, homododecamer.

The enzyme catalyses 3-dehydroquinate = 3-dehydroshikimate + H2O. It participates in metabolic intermediate biosynthesis; chorismate biosynthesis; chorismate from D-erythrose 4-phosphate and phosphoenolpyruvate: step 3/7. Its function is as follows. Catalyzes a trans-dehydration via an enolate intermediate. The polypeptide is 3-dehydroquinate dehydratase (Salinispora tropica (strain ATCC BAA-916 / DSM 44818 / JCM 13857 / NBRC 105044 / CNB-440)).